An 82-amino-acid polypeptide reads, in one-letter code: Small ribosomal subunit protein bS18 (82 aa).

Positions 1–25 are disordered; the sequence is MADTSSSQARRPFHRRRKTCPFSGA.

Belongs to the bacterial ribosomal protein bS18 family. As to quaternary structure, part of the 30S ribosomal subunit. Forms a tight heterodimer with protein bS6.

Binds as a heterodimer with protein bS6 to the central domain of the 16S rRNA, where it helps stabilize the platform of the 30S subunit. The sequence is that of Small ribosomal subunit protein bS18 from Agrobacterium fabrum (strain C58 / ATCC 33970) (Agrobacterium tumefaciens (strain C58)).